The sequence spans 530 residues: MSIDTYTETLKINQLIEKATSHFQLSSTQLYKKILKNHEGELTELGAINVKTGKYTGRSPKDKFIVTEPSYKDNINWGDINQPMDEETFLKLYNKVLDYLNQKEELYIFSGYAGSDKESRLKLKVINELAWHNLFARNMFIRPESIDEAQNIKPNFTIVSAPHFKANPKLDGTHSETFVIISFKHKVILIGGTEYAGEMKKGIFSVMNYLLPMQDIMSMHCSANVGEKGDVALFFGLSGTGKTTLSADPKRKLIGDDEHGWNKNGVFNIEGGCYAKAIHLSKQKEPQIYNAIKYGTILENTVTNDDGTIDFDDNTYTENTRAAYPIDYIENIVTPSKAAHPNTIIFLTADAFGVIPPISKLTKDQAMYHFLSGFTSKLAGTERGVTEPQPSFSTCFGAPFLPLSPTKYADLLGNLIDIHDVDVYLVNTGWTGGKYGIGRRISLHYTREMVDQAISGKLKNTKYIKDDTFGLNIPVQIDSVPTTILNPINAWNNKDNYKAQAYDLIQRFNNNFKKFGKEVEHIANKGAFNQ.

The substrate site is built by Arg58, Tyr195, and Lys201. ATP-binding positions include Lys201, His220, and 236-244 (GLSGTGKTT). Residues Lys201 and His220 each contribute to the Mn(2+) site. Residue Asp257 participates in Mn(2+) binding. ATP-binding positions include Glu285, Arg321, 440–441 (RI), and Thr446. Arg321 is a substrate binding site.

This sequence belongs to the phosphoenolpyruvate carboxykinase (ATP) family. The cofactor is Mn(2+).

The protein resides in the cytoplasm. It carries out the reaction oxaloacetate + ATP = phosphoenolpyruvate + ADP + CO2. The protein operates within carbohydrate biosynthesis; gluconeogenesis. Involved in the gluconeogenesis. Catalyzes the conversion of oxaloacetate (OAA) to phosphoenolpyruvate (PEP) through direct phosphoryl transfer between the nucleoside triphosphate and OAA. This chain is Phosphoenolpyruvate carboxykinase (ATP), found in Staphylococcus epidermidis (strain ATCC 12228 / FDA PCI 1200).